The following is a 445-amino-acid chain: Anthranilate N-benzoyltransferase protein 1 (445 aa).

Residues histidine 164 and aspartate 392 each act as proton acceptor in the active site.

The protein belongs to the plant acyltransferase family. Post-translationally, N-terminus is blocked.

It catalyses the reaction anthranilate + benzoyl-CoA = N-benzoylanthranilate + CoA. The protein operates within phytoalexin biosynthesis; methoxydianthramide B biosynthesis. In terms of biological role, catalyzes the formation of N-benzoylanthranilate, in the course of methoxydianthramide B, a phytoalexin. Phytoalexins are produced in response to infection by parasites, and are essential for the expression of disease resistance. The polypeptide is Anthranilate N-benzoyltransferase protein 1 (HCBT1) (Dianthus caryophyllus (Carnation)).